The sequence spans 95 residues: FMRFamide-like neuropeptides 16 (95 aa).

The N-terminal stretch at 1-24 is a signal peptide; it reads MSLSGFEFSSIIAVLLLLIQLSSA. A propeptide spanning residues 25 to 58 is cleaved from the precursor; that stretch reads AVLPVDYASQYGVASADEMTALPEEGSLFAERPA. Phe67, Phe77, and Phe87 each carry phenylalanine amide. Positions 90-95 are excised as a propeptide; it reads SAPFEQ.

The protein belongs to the FARP (FMRFamide related peptide) family.

The protein resides in the secreted. Its function is as follows. FMRFamides and FMRFamide-like peptides are neuropeptides. AQTFVRF-amide inhibits the activity of dissected pharyngeal myogenic muscle system. The sequence is that of FMRFamide-like neuropeptides 16 (flp-16) from Caenorhabditis briggsae.